A 337-amino-acid chain; its full sequence is Basic membrane protein A1 (337 aa).

The N-terminal stretch at 1–17 is a signal peptide; the sequence is MNKLLLLILFECIIFLS. The N-palmitoyl cysteine moiety is linked to residue Cys18. Cys18 carries S-diacylglycerol cysteine lipidation.

Belongs to the BMP lipoprotein family. As to quaternary structure, monomer.

It is found in the cell inner membrane. In terms of biological role, immunogenic protein. May be part of an ABC-type nucleoside uptake system involved in the purine salvage pathway. In Borrelia garinii subsp. bavariensis (strain ATCC BAA-2496 / DSM 23469 / PBi) (Borreliella bavariensis), this protein is Basic membrane protein A1 (bmpA1).